We begin with the raw amino-acid sequence, 292 residues long: Phosphatidylserine decarboxylase proenzyme (292 aa).

Catalysis depends on charge relay system; for autoendoproteolytic cleavage activity residues Asp-89, His-146, and Ser-252. Residue Ser-252 is the Schiff-base intermediate with substrate; via pyruvic acid; for decarboxylase activity of the active site. Residue Ser-252 is modified to Pyruvic acid (Ser); by autocatalysis.

Belongs to the phosphatidylserine decarboxylase family. PSD-B subfamily. Prokaryotic type I sub-subfamily. Heterodimer of a large membrane-associated beta subunit and a small pyruvoyl-containing alpha subunit. The cofactor is pyruvate. Is synthesized initially as an inactive proenzyme. Formation of the active enzyme involves a self-maturation process in which the active site pyruvoyl group is generated from an internal serine residue via an autocatalytic post-translational modification. Two non-identical subunits are generated from the proenzyme in this reaction, and the pyruvate is formed at the N-terminus of the alpha chain, which is derived from the carboxyl end of the proenzyme. The autoendoproteolytic cleavage occurs by a canonical serine protease mechanism, in which the side chain hydroxyl group of the serine supplies its oxygen atom to form the C-terminus of the beta chain, while the remainder of the serine residue undergoes an oxidative deamination to produce ammonia and the pyruvoyl prosthetic group on the alpha chain. During this reaction, the Ser that is part of the protease active site of the proenzyme becomes the pyruvoyl prosthetic group, which constitutes an essential element of the active site of the mature decarboxylase.

The protein resides in the cell membrane. The enzyme catalyses a 1,2-diacyl-sn-glycero-3-phospho-L-serine + H(+) = a 1,2-diacyl-sn-glycero-3-phosphoethanolamine + CO2. The protein operates within phospholipid metabolism; phosphatidylethanolamine biosynthesis; phosphatidylethanolamine from CDP-diacylglycerol: step 2/2. Functionally, catalyzes the formation of phosphatidylethanolamine (PtdEtn) from phosphatidylserine (PtdSer). The chain is Phosphatidylserine decarboxylase proenzyme from Shewanella sp. (strain ANA-3).